Here is a 955-residue protein sequence, read N- to C-terminus: RNA polymerase-associated protein RapA (955 aa).

The Helicase ATP-binding domain maps to 163–333 (EVGHRYAPRV…FARLRLLDPE (171 aa)). 176–183 (DEVGLGKT) is an ATP binding site. Positions 279–282 (DEAH) match the DEAH box motif. In terms of domain architecture, Helicase C-terminal spans 478–642 (RVDWLLELLL…AVRDELFELL (165 aa)).

This sequence belongs to the SNF2/RAD54 helicase family. RapA subfamily. In terms of assembly, interacts with the RNAP. Has a higher affinity for the core RNAP than for the holoenzyme. Its ATPase activity is stimulated by binding to RNAP.

In terms of biological role, transcription regulator that activates transcription by stimulating RNA polymerase (RNAP) recycling in case of stress conditions such as supercoiled DNA or high salt concentrations. Probably acts by releasing the RNAP, when it is trapped or immobilized on tightly supercoiled DNA. Does not activate transcription on linear DNA. Probably not involved in DNA repair. The chain is RNA polymerase-associated protein RapA from Aeromonas salmonicida (strain A449).